Here is a 360-residue protein sequence, read N- to C-terminus: Phospho-N-acetylmuramoyl-pentapeptide-transferase (360 aa).

A run of 10 helical transmembrane segments spans residues 21-41 (YLSF…LWMG), 73-93 (TMGG…WADL), 94-114 (SNPY…VGFV), 132-152 (WKYF…YAHG), 168-188 (VMPQ…VGTS), 199-219 (GLAI…AWAT), 239-259 (LVVV…FNTY), 263-283 (VFMG…IAVL), 288-308 (LVLV…ILQV), and 338-358 (VIVR…ATLK).

Belongs to the glycosyltransferase 4 family. MraY subfamily. It depends on Mg(2+) as a cofactor.

Its subcellular location is the cell inner membrane. It catalyses the reaction UDP-N-acetyl-alpha-D-muramoyl-L-alanyl-gamma-D-glutamyl-meso-2,6-diaminopimeloyl-D-alanyl-D-alanine + di-trans,octa-cis-undecaprenyl phosphate = di-trans,octa-cis-undecaprenyl diphospho-N-acetyl-alpha-D-muramoyl-L-alanyl-D-glutamyl-meso-2,6-diaminopimeloyl-D-alanyl-D-alanine + UMP. The protein operates within cell wall biogenesis; peptidoglycan biosynthesis. In terms of biological role, catalyzes the initial step of the lipid cycle reactions in the biosynthesis of the cell wall peptidoglycan: transfers peptidoglycan precursor phospho-MurNAc-pentapeptide from UDP-MurNAc-pentapeptide onto the lipid carrier undecaprenyl phosphate, yielding undecaprenyl-pyrophosphoryl-MurNAc-pentapeptide, known as lipid I. The protein is Phospho-N-acetylmuramoyl-pentapeptide-transferase of Vibrio atlanticus (strain LGP32) (Vibrio splendidus (strain Mel32)).